Reading from the N-terminus, the 264-residue chain is Thymidylate synthase (264 aa).

R21 provides a ligand contact to dUMP. H51 contacts (6R)-5,10-methylene-5,6,7,8-tetrahydrofolate. 126–127 provides a ligand contact to dUMP; it reads RR. C146 (nucleophile) is an active-site residue. DUMP contacts are provided by residues 166-169, N177, and 207-209; these read RSCD and HLY. D169 is a binding site for (6R)-5,10-methylene-5,6,7,8-tetrahydrofolate. A (6R)-5,10-methylene-5,6,7,8-tetrahydrofolate-binding site is contributed by A263.

It belongs to the thymidylate synthase family. Bacterial-type ThyA subfamily. Homodimer.

The protein resides in the cytoplasm. The enzyme catalyses dUMP + (6R)-5,10-methylene-5,6,7,8-tetrahydrofolate = 7,8-dihydrofolate + dTMP. It participates in pyrimidine metabolism; dTTP biosynthesis. In terms of biological role, catalyzes the reductive methylation of 2'-deoxyuridine-5'-monophosphate (dUMP) to 2'-deoxythymidine-5'-monophosphate (dTMP) while utilizing 5,10-methylenetetrahydrofolate (mTHF) as the methyl donor and reductant in the reaction, yielding dihydrofolate (DHF) as a by-product. This enzymatic reaction provides an intracellular de novo source of dTMP, an essential precursor for DNA biosynthesis. The protein is Thymidylate synthase of Shewanella sp. (strain MR-4).